Consider the following 339-residue polypeptide: Serpentine receptor class r-10 (339 aa).

The Extracellular portion of the chain corresponds to 1-11; it reads MSGELWITLVD. The helical transmembrane segment at 12 to 32 threads the bilayer; the sequence is TADIVGVTLTFCVNIVLLGLL. The Cytoplasmic segment spans residues 33–42; it reads KTRGKNLGTY. The helical transmembrane segment at 43 to 63 threads the bilayer; it reads KYLMAFFSVFSIFYAIIEFIL. Topologically, residues 64–92 are extracellular; that stretch reads RPIMHIENTTFFLISRKRFNYSTKLGKIN. N-linked (GlcNAc...) asparagine glycans are attached at residues Asn71 and Asn83. The chain crosses the membrane as a helical span at residues 93–113; sequence SAFYCACFATSFVVSGVHFVY. The Cytoplasmic segment spans residues 114-131; sequence RYFATCKPNLLRLFNLPT. The helical transmembrane segment at 132-152 threads the bilayer; it reads LLLWPLGCSVPVTMWASVSYF. Over 153-201 the chain is Extracellular; the sequence is LYPDTEYTEAAVTNVLNNHYNWIKKENVSYIAYVYYQYENGVRHIYLKN. Asn179 carries an N-linked (GlcNAc...) asparagine glycan. A helical transmembrane segment spans residues 202–222; that stretch reads LLGCFVHYFVMSMTFVVMFYC. The Cytoplasmic portion of the chain corresponds to 223–254; the sequence is GYATWKTMNEHKDVSDRTRALQKQLFKALVLQ. Residues 255-275 traverse the membrane as a helical segment; that stretch reads TLIPTIFMYAPTGVMFIAPFF. Residues 276–284 are Extracellular-facing; that stretch reads DVNLNANAN. The chain crosses the membrane as a helical span at residues 285–305; sequence FIVFCSFLYPGLDPLILILII. At 306-339 the chain is on the cytoplasmic side; it reads RDFRRTIFNFLCGKKNSVDESRSTTRANLSQVPT.

This sequence belongs to the nematode receptor-like protein str family. In terms of assembly, interacts with odr-4. In terms of tissue distribution, strongly expressed in the sensory cilia of AWA olfactory neurons, and at low levels in the CEP neurons.

The protein localises to the cell projection. Its subcellular location is the cilium membrane. Functionally, an odorant receptor which affects chemotaxis to the volatile odorant diacetyl. Specifies AWA neuronal cell fate via the odr-7 pathway. The chain is Serpentine receptor class r-10 from Caenorhabditis elegans.